Here is a 506-residue protein sequence, read N- to C-terminus: Glutamate--tRNA ligase (506 aa).

Residues 24–34 (PSPTGLQHIGG) carry the 'HIGH' region motif. Zn(2+)-binding residues include cysteine 121, cysteine 123, cysteine 148, and histidine 150. Positions 266 to 270 (KLSKR) match the 'KMSKS' region motif. Lysine 269 is an ATP binding site.

Belongs to the class-I aminoacyl-tRNA synthetase family. Glutamate--tRNA ligase type 1 subfamily. As to quaternary structure, monomer. Zn(2+) is required as a cofactor.

It is found in the cytoplasm. It carries out the reaction tRNA(Glu) + L-glutamate + ATP = L-glutamyl-tRNA(Glu) + AMP + diphosphate. In terms of biological role, catalyzes the attachment of glutamate to tRNA(Glu) in a two-step reaction: glutamate is first activated by ATP to form Glu-AMP and then transferred to the acceptor end of tRNA(Glu). The chain is Glutamate--tRNA ligase from Borrelia duttonii (strain Ly).